The primary structure comprises 958 residues: Probable transport protein MmpL1 (958 aa).

The next 12 membrane-spanning stretches (helical) occupy residues 19-39, 192-212, 216-236, 252-272, 295-315, 329-349, 377-397, 762-782, 791-811, 814-834, 868-888, and 906-927; these read ALSL…NVVA, SLHT…FIAY, SAAL…RGII, VNVL…FLVG, TAHV…CLGF, AIGL…IIAV, WPGP…LALP, YDVM…MLGI, VIVG…VLIW, ILHM…MLAV, VVTI…ASDL, and TLVV…WFWW.

This sequence belongs to the resistance-nodulation-cell division (RND) (TC 2.A.6) family. MmpL subfamily.

Its subcellular location is the cell membrane. This is Probable transport protein MmpL1 (mmpL1) from Mycobacterium tuberculosis (strain CDC 1551 / Oshkosh).